Reading from the N-terminus, the 622-residue chain is Probable potassium transport system protein Kup (622 aa).

12 helical membrane passes run 8-28, 50-70, 103-123, 137-157, 168-188, 203-223, 247-267, 285-305, 337-357, 366-386, 393-413, and 419-439; these read LAALTLGAIGVVYGDIGTSVL, ILSIFFWTLTVIVSLKYVVLV, LAVGIFGTSLFYGDGVITPAI, PHFKKYVIPITLVVLFCLFAV, FFGPITLVWFASIALLGLAHI, ALGFMFANPGTSFIILGAVVL, WFGVAMPALTLNYFGQGALLL, ALIPLVVLATMATVIASQALI, IYMPLVNWGLFVAIVLAVVMF, AYGIAVTLDMLITTTLTFFVI, PLALCVAATGCFAVVDLAFFA, and LFQGGWFPLMIGGIVFALMMT.

This sequence belongs to the HAK/KUP transporter (TC 2.A.72) family.

The protein localises to the cell inner membrane. The catalysed reaction is K(+)(in) + H(+)(in) = K(+)(out) + H(+)(out). Transport of potassium into the cell. Likely operates as a K(+):H(+) symporter. This Verminephrobacter eiseniae (strain EF01-2) protein is Probable potassium transport system protein Kup.